The primary structure comprises 264 residues: Glutamate racemase (264 aa).

Substrate is bound by residues 11-12 (DS) and 43-44 (YG). Cys74 functions as the Proton donor/acceptor in the catalytic mechanism. Residue 75–76 (NT) coordinates substrate. Cys193 (proton donor/acceptor) is an active-site residue. A substrate-binding site is contributed by 194–195 (TH).

It belongs to the aspartate/glutamate racemases family.

The enzyme catalyses L-glutamate = D-glutamate. The protein operates within cell wall biogenesis; peptidoglycan biosynthesis. Its function is as follows. Provides the (R)-glutamate required for cell wall biosynthesis. The chain is Glutamate racemase from Bifidobacterium longum (strain DJO10A).